The sequence spans 423 residues: T-box protein 2 (423 aa).

The segment at residues 70 to 243 is a DNA-binding region (T-box); sequence LWQQFSQCGT…NNPFAKGFRD (174 aa). Disordered regions lie at residues 238–324 and 384–423; these read AKGF…PLRS and VEATSEDSEEAEKPEVKKEQKSVTPPKKGGFDVLDLLSKP. Positions 261-283 are enriched in polar residues; it reads DATQSPPGKTASLPTHSPHPSES. Positions 302-317 are enriched in low complexity; the sequence is TPTTSSLSTSTTPTLS. Residues 394-404 are compositionally biased toward basic and acidic residues; the sequence is AEKPEVKKEQK.

In terms of processing, sumoylated. As to expression, expressed in body wall muscles and a subset of pharyngeal neurons. Expressed in head neurons and occassionally tail neurons. Not expressed in the pharynx.

Its subcellular location is the nucleus. Its function is as follows. Involved in the transcriptional regulation of genes required for the development of pharyngeal muscles derived from the ABa lineage. Acts as a transcriptional repressor and binds to T-box binding sites in its own promoter to negatively autoregulate its own expression in neurons, seam cells and the gut in order to restrict its expression to certain tissues. May function together with the nfya-1-NF-Y complex to repress its own expression. Plays a role in neural fate specification in the hermaphrodite-specific neuron (HSN)/PHB neuron lineage, acting in concert with homeobox protein egl-5 and the asymmetric cell division protein ham-1. The protein is T-box protein 2 of Caenorhabditis elegans.